A 429-amino-acid polypeptide reads, in one-letter code: 4-hydroxyphenylacetate degradation bifunctional isomerase/decarboxylase (429 aa).

2 Approximate repeats span residues 1-215 and 216-429; these read MKGT…RKSF and PTLP…ETAK. A divalent metal cation is bound by residues Glu-276, Glu-278, and Asp-307.

The protein belongs to the FAH family. As to quaternary structure, monomer. Requires Mg(2+) as cofactor.

It carries out the reaction (2E,4Z)-5-hydroxypenta-2,4-diene-1,2,5-tricarboxylate = (3E,5R)-5-carboxy-2-oxohept-3-enedioate. It catalyses the reaction (3E,5R)-5-carboxy-2-oxohept-3-enedioate + H(+) = (4Z)-2-oxohept-4-enedioate + CO2. It functions in the pathway aromatic compound metabolism; 4-hydroxyphenylacetate degradation; pyruvate and succinate semialdehyde from 4-hydroxyphenylacetate: step 4/7. Its pathway is aromatic compound metabolism; 4-hydroxyphenylacetate degradation; pyruvate and succinate semialdehyde from 4-hydroxyphenylacetate: step 5/7. In terms of biological role, decarboxylates OPET (5-oxo-pent-3-ene-1,2,5-tricarboxylic acid) into HHDD (2-hydroxy-hept-2,4-diene-1,7-dioate) and isomerizes it to OHED (2-oxo-hept-3-ene-1,7-dioate). The polypeptide is 4-hydroxyphenylacetate degradation bifunctional isomerase/decarboxylase (hpaG) (Escherichia coli).